The chain runs to 378 residues: Succinyl-diaminopimelate desuccinylase (378 aa).

His-68 contacts Zn(2+). The active site involves Asp-70. Asp-101 is a binding site for Zn(2+). Catalysis depends on Glu-135, which acts as the Proton acceptor. Zn(2+) contacts are provided by Glu-136, Glu-164, and His-350.

Belongs to the peptidase M20A family. DapE subfamily. As to quaternary structure, homodimer. Zn(2+) is required as a cofactor. It depends on Co(2+) as a cofactor.

The enzyme catalyses N-succinyl-(2S,6S)-2,6-diaminopimelate + H2O = (2S,6S)-2,6-diaminopimelate + succinate. It participates in amino-acid biosynthesis; L-lysine biosynthesis via DAP pathway; LL-2,6-diaminopimelate from (S)-tetrahydrodipicolinate (succinylase route): step 3/3. Functionally, catalyzes the hydrolysis of N-succinyl-L,L-diaminopimelic acid (SDAP), forming succinate and LL-2,6-diaminopimelate (DAP), an intermediate involved in the bacterial biosynthesis of lysine and meso-diaminopimelic acid, an essential component of bacterial cell walls. The sequence is that of Succinyl-diaminopimelate desuccinylase from Vibrio campbellii (strain ATCC BAA-1116).